The chain runs to 821 residues: MPLVRLQVRNVYGLGQKELHTKVDREDPKAILDDVAVSGLVGILRQLGDLTEFAAEIFHGIQEEVMITASRSNKLKMRLKQIEAKVPTIQKTVLAQTNHIHFAYTGGLEWHPRIPNVQNHFMYDELPPFIMTPYEDCREPPRLHLLDKFDINGPGSCLKRYSDPTHFKRASRASKPSEIKKKKSIQRGRDISRLASVANQSDRKTCTSLSFSGRTSTSKTASTIEIESKSDLQEHRSFSFDSRSGGEKPKRVSSSSRFTPGSRTIASVLSESESESDSPSQDLTARGSSSVSWHEKAEIVECNVLQCATDEAPEVMETNFVLDAEPVSRLKEHSAVEAVQDIKPKELEMDNEDETESEGDDFVDALYTIDSESENDEAFQATKEVQKNLYNDITEQETEKISNNFSVDETKCAATSELHLSSSPVYKSDELIHQDPWAASEISSGTHSYSNGFSNPLYDISGIQEHQESEEVESSCDTESIKTWTNGNLLGLKPSKPKIIAETIPEIVEDIDSETFQEHLREDYKAPFDWFTSSPPLDHMKISFKSSETLPSSELQLKLPDEYTFSSFQLVPETIATSLPDSDSDKDTFCRSSSYISDNSDNDNRSVSMSEQQWEEESEGIRESKRQQELYDSFHRVNAEASSLPVPFPKIETTNGCLVENVSYLQNPAEPLPPPLPPLQWMVSKIPSAGFEDNNKQSLKDALTQAFEKNNNSLTAVKKKEPHIVTVSDPKLVTKVHLKNNVRDYKQSHGNTNETEAGDFLHQIRTKQFNLRRVVRTKTSSSETTMNTNISVILEKANSIRQAVASDDGEGESDTWSDSDT.

Disordered stretches follow at residues 168 to 189, 205 to 289, and 577 to 625; these read KRAS…QRGR, TCTS…RGSS, and TSLP…RESK. Residues 206-225 show a composition bias toward polar residues; the sequence is CTSLSFSGRTSTSKTASTIE. Positions 226–250 are enriched in basic and acidic residues; the sequence is IESKSDLQEHRSFSFDSRSGGEKPK. Residues 252–265 are compositionally biased toward polar residues; the sequence is VSSSSRFTPGSRTI. A compositionally biased stretch (low complexity) spans 592–612; the sequence is SSSYISDNSDNDNRSVSMSEQ. Residues 756–774 form the WH2 domain; it reads EAGDFLHQIRTKQFNLRRV. A disordered region spans residues 802-821; that stretch reads QAVASDDGEGESDTWSDSDT. A compositionally biased stretch (acidic residues) spans 807-821; it reads DDGEGESDTWSDSDT.

The protein belongs to the SCAR/WAVE family. Binds BRK1 and actin. Interacts with SPK1, ABI1 and ABI2. In terms of tissue distribution, expressed in expanding cotyledons, expanding leaves and expanding siliques containing developing embryos. Detected in unopened flower buds and in the expanding tip region of roots. Reduced expression in mature leaves and mature cotyledons.

Its subcellular location is the cytoplasm. It is found in the cytoskeleton. Involved in regulation of actin and microtubule organization. Part of a WAVE complex that activates the Arp2/3 complex. Regulates trichome branch positioning and expansion. The sequence is that of Protein SCAR1 (SCAR1) from Arabidopsis thaliana (Mouse-ear cress).